Reading from the N-terminus, the 1235-residue chain is MHFRRTMSRVPTLASLEIRYKKSFGHKFRDFIALCGHYFAPVKKYIFPSFIAVHYFYTISLTLITSILLYPIKNTRYIDTLFLAAGAVTQGGLNTVDINNLSLYQQIVLYIVCCISTPIAVHSCLAFVRLYWFERYFDGIRDSSRRNFKMRRTKTILERELTARTMTKNRTGTQRTSYPRKQAKTDDFQEKLFSGEMVNRDEQDSVHSDQNSHDISRDSSNNNTNHNGSSGSLDDFVKEDETDDNGEYQENNSYSTVGSSSNTVADESLNQKPKPSSLRFDEPHSKQRPARVPSEKFAKRRGSRDISPADMYRSIMMLQGKHEATAEDEGPPLVIGSPADGTRYKSNVNKLKKATGINGNKIKIRDKGNESNTDQNSVSSEANSTASVSDESSLHTNFGNKVPSLRTNTHRSNSGPIAITDNAETDKKHGPSIQFDITKPPRKISKRVSTFDDLNPKSSVLYRKKASKKYLMKHFPKARRIRQQIKRRLSTGSIEKNSSNNVSDRKPITDMDDDDDDDDNDGDNNEEYFADNESGDEDERVQQSEPHSDSELKSHQQQQEKHQLQQNLHRMYKTKSFDDNRSRAVPMERSRTIDMAEAKDLNELARTPDFQKMVYQNWKAHHRKKPNFRKRGWNNKIFEHGPYASDSDRNYPDNSNTGNSILHYAESILHHDGSHKNGSEEASSDSNENIYSTNGGSDHNGLNNYPTYNDDEEGYYGLHFDTDYDLDPRHDLSKGSGKTYLSWQPTIGRNSNFLGLTRAQKDELGGVEYRAIKLLCTILVVYYVGWHIVAFVMLVPWIILKKHYSEVVRDDGVSPTWWGFWTAMSAFNDLGLTLTPNSMMSFNKAVYPLIVMIWFIIIGNTGFPILLRCIIWIMFKISPDLSQMRESLGFLLDHPRRCFTLLFPKAATWWLLLTLAGLNITDWILFIILDFGSTVVKSLSKGYRVLVGLFQSVSTRTAGFSVVDLSQLHPSIQVSYMLMMYVSVLPLAISIRRTNVYEEQSLGLYGDMGGEPEDTDTEDDGNDEDDDEENESHEGQSSQRSSSNNNNNNNRKKKKKKKTENPNEISTKSFIGAHLRKQLSFDLWFLFLGLFIICICEGDKIKDVQEPNFNIFAILFEIVSAYGTVGLSLGYPDTNQSFSRQFTTLSKLVIIAMLIRGKNRGLPYSLDRAIILPSDRLEHIDHLEGMKLKRQARTNTEDPMTEHFKRSFTDVKHRWGALKRKTTHSRNPKRSSTTL.

Phosphoserine is present on S15. A run of 2 helical transmembrane segments spans residues 49–70 (SFIAVHYFYTISLTLITSILLY) and 78–98 (IDTLFLAAGAVTQGGLNTVDI). Residue N100 is glycosylated (N-linked (GlcNAc...) asparagine). A helical membrane pass occupies residues 107–127 (IVLYIVCCISTPIAVHSCLAF). Disordered regions lie at residues 161 to 310 (LTAR…SPAD), 323 to 344 (EATAEDEGPPLVIGSPADGTRY), 361 to 441 (KIKI…TKPP), and 488 to 565 (RLST…HQLQ). A compositionally biased stretch (polar residues) spans 164–179 (RTMTKNRTGTQRTSYP). N-linked (GlcNAc...) asparagine glycosylation is present at N169. Over residues 198-217 (VNRDEQDSVHSDQNSHDISR) the composition is skewed to basic and acidic residues. Low complexity predominate over residues 219–232 (SSNNNTNHNGSSGS). N222 and N227 each carry an N-linked (GlcNAc...) asparagine glycan. Residues 237–247 (VKEDETDDNGE) are compositionally biased toward acidic residues. The span at 248–274 (YQENNSYSTVGSSSNTVADESLNQKPK) shows a compositional bias: polar residues. N251 carries N-linked (GlcNAc...) asparagine glycosylation. Residues N369 and N383 are each glycosylated (N-linked (GlcNAc...) asparagine). Composition is skewed to polar residues over residues 370–415 (ESNT…SNSG) and 490–502 (STGSIEKNSSNNV). S414 carries the post-translational modification Phosphoserine. N-linked (GlcNAc...) asparagine glycans are attached at residues N497, N501, and N532. Positions 510-539 (DMDDDDDDDDNDGDNNEEYFADNESGDEDE) are enriched in acidic residues. The residue at position 534 (S534) is a Phosphoserine. Residues 540 to 563 (RVQQSEPHSDSELKSHQQQQEKHQ) are compositionally biased toward basic and acidic residues. N-linked (GlcNAc...) asparagine glycans are attached at residues N580 and N677. Residues 671 to 706 (HDGSHKNGSEEASSDSNENIYSTNGGSDHNGLNNYP) are disordered. Positions 680-706 (EEASSDSNENIYSTNGGSDHNGLNNYP) are enriched in polar residues. 5 helical membrane-spanning segments follow: residues 778–800 (ILVVYYVGWHIVAFVMLVPWIIL), 813–834 (VSPTWWGFWTAMSAFNDLGLTL), 838–858 (SMMSFNKAVYPLIVMIWFIII), 862–882 (GFPILLRCIIWIMFKISPDLS), and 898–918 (CFTLLFPKAATWWLLLTLAGL). N919 carries an N-linked (GlcNAc...) asparagine glycan. The next 2 membrane-spanning stretches (helical) occupy residues 923 to 943 (WILFIILDFGSTVVKSLSKGY) and 971 to 991 (SIQVSYMLMMYVSVLPLAISI). The tract at residues 1003–1063 (GLYGDMGGEP…KKKKKTENPN (61 aa)) is disordered. Positions 1010–1031 (GEPEDTDTEDDGNDEDDDEENE) are enriched in acidic residues. N1030 is a glycosylation site (N-linked (GlcNAc...) asparagine). Low complexity predominate over residues 1036–1049 (QSSQRSSSNNNNNN). The next 2 membrane-spanning stretches (helical) occupy residues 1078–1098 (QLSFDLWFLFLGLFIICICEG) and 1111–1131 (IFAILFEIVSAYGTVGLSLGY). The N-linked (GlcNAc...) asparagine glycan is linked to N1135.

This sequence belongs to the TrkH potassium transport family.

The protein resides in the membrane. Its function is as follows. This protein is required for high-affinity potassium transport. This chain is High-affinity potassium transport protein (TRK1), found in Saccharomyces cerevisiae (strain ATCC 204508 / S288c) (Baker's yeast).